Here is a 454-residue protein sequence, read N- to C-terminus: Ribosomal protein uS12 methylthiotransferase RimO (454 aa).

Residues 14–125 form the MTTase N-terminal domain; the sequence is SKVAFSHVGC…IAKVLDRVEK (112 aa). Cys23, Cys59, Cys88, Cys163, Cys167, and Cys170 together coordinate [4Fe-4S] cluster. Residues 149 to 378 enclose the Radical SAM core domain; that stretch reads DKNKFVAYLR…ISVQQNISKD (230 aa). Residues 381–452 form the TRAM domain; that stretch reads QSYVGSKMKI…EYDLYGETLK (72 aa).

This sequence belongs to the methylthiotransferase family. RimO subfamily. [4Fe-4S] cluster serves as cofactor.

It localises to the cytoplasm. It carries out the reaction L-aspartate(89)-[ribosomal protein uS12]-hydrogen + (sulfur carrier)-SH + AH2 + 2 S-adenosyl-L-methionine = 3-methylsulfanyl-L-aspartate(89)-[ribosomal protein uS12]-hydrogen + (sulfur carrier)-H + 5'-deoxyadenosine + L-methionine + A + S-adenosyl-L-homocysteine + 2 H(+). In terms of biological role, catalyzes the methylthiolation of an aspartic acid residue of ribosomal protein uS12. The sequence is that of Ribosomal protein uS12 methylthiotransferase RimO from Prochlorococcus marinus (strain MIT 9215).